A 598-amino-acid chain; its full sequence is Vanadium-dependent bromoperoxidase (598 aa).

Phenylalanine 361, glutamine 363, aspartate 365, aspartate 368, and glutamine 370 together coordinate Ca(2+). 2 residues coordinate vanadate: lysine 400 and arginine 408. Histidine 480 is a catalytic residue. Serine 485, glycine 486, histidine 487, arginine 547, and histidine 553 together coordinate vanadate. Histidine 487 is an active-site residue.

This sequence belongs to the vanadium-dependent haloperoxidase family. In terms of assembly, homododecamer. Requires Ca(2+) as cofactor. Vanadate serves as cofactor.

The catalysed reaction is RH + Br(-) + H2O2 = RBr + 2 H2O.. Functionally, catalyzes the halogenation of organic substrates in the presence of hydrogen peroxide. The sequence is that of Vanadium-dependent bromoperoxidase from Corallina officinalis (Coral seaweed).